Reading from the N-terminus, the 323-residue chain is Porphobilinogen deaminase (323 aa).

At C251 the chain carries S-(dipyrrolylmethanemethyl)cysteine.

Belongs to the HMBS family. As to quaternary structure, monomer. The cofactor is dipyrromethane.

The catalysed reaction is 4 porphobilinogen + H2O = hydroxymethylbilane + 4 NH4(+). It functions in the pathway porphyrin-containing compound metabolism; protoporphyrin-IX biosynthesis; coproporphyrinogen-III from 5-aminolevulinate: step 2/4. Its pathway is porphyrin-containing compound metabolism; chlorophyll biosynthesis. Functionally, tetrapolymerization of the monopyrrole PBG into the hydroxymethylbilane pre-uroporphyrinogen in several discrete steps. This Nostoc sp. (strain PCC 7120 / SAG 25.82 / UTEX 2576) protein is Porphobilinogen deaminase (hemC).